The chain runs to 910 residues: Staphylococcal nuclease domain-containing protein 1 (910 aa).

Position 2 is an N-acetylalanine (alanine 2). TNase-like domains follow at residues 18–166 (TVQR…MWSE), 193–328 (KPVN…IWRD), and 341–496 (KQFV…LHSK). Threonine 103 is subject to Phosphothreonine. Lysine 193 carries the N6-acetyllysine modification. Threonine 240 is subject to Phosphothreonine. Short sequence motifs (nuclear localization signal) lie at residues 321-325 (RRLRI) and 388-392 (KKLRP). The residue at position 426 (serine 426) is a Phosphoserine. Residue lysine 513 forms a Glycyl lysine isopeptide (Lys-Gly) (interchain with G-Cter in SUMO2) linkage. In terms of domain architecture, TNase-like 4 spans 525-660 (GRSEAVVEYV…KQKKEKVWAH (136 aa)). Lysine 641 is subject to N6-acetyllysine. The residue at position 645 (serine 645) is a Phosphoserine. Residues 729–787 (APRRGEFCIAKFVDGEWYRARVEKVESPAKIHVFYIDYGNREVLPSTRLGTLSPAFSTR) enclose the Tudor domain. The residue at position 779 (threonine 779) is a Phosphothreonine. Phosphoserine is present on residues serine 781, serine 785, and serine 909.

As to quaternary structure, forms a ternary complex with STAT6 and POLR2A. Associates with the RNA-induced silencing complex (RISC). Interacts with the RISC components AGO2, FMR1 and TNRC6A. Interacts with GTF2E1 and GTF2E2. Interacts with PIM1. Interacts with STAT5. Interacts with SYT11 (via C2 2 domain); the interaction with SYT11 is direct. In terms of assembly, (Microbial infection) Interacts with EAV NSP1. Binds to acidic transactivation domain of EBNA2. Interacts with SARS-CoV-2 NSP9. Post-translationally, phosphorylated by PIM1 in vitro. Ubiquitously expressed.

It localises to the cytoplasm. Its subcellular location is the nucleus. It is found in the melanosome. The catalysed reaction is Endonucleolytic cleavage to nucleoside 3'-phosphates and 3'-phosphooligonucleotide end-products.. Functionally, endonuclease that mediates miRNA decay of both protein-free and AGO2-loaded miRNAs. As part of its function in miRNA decay, regulates mRNAs involved in G1-to-S phase transition. Functions as a bridging factor between STAT6 and the basal transcription factor. Plays a role in PIM1 regulation of MYB activity. Functions as a transcriptional coactivator for STAT5. Its function is as follows. (Microbial infection) Functions as a transcriptional coactivator for the Epstein-Barr virus nuclear antigen 2 (EBNA2). In terms of biological role, (Microbial infection) Promotes SARS-CoV-2 RNA synthesis by binding to negative-sense RNA and the viral protein nsp9. This chain is Staphylococcal nuclease domain-containing protein 1 (SND1), found in Homo sapiens (Human).